The sequence spans 150 residues: MSTIMVLNGPNLNLLGTREPATYGYETLADVEVMCREAALSLGHEVECHQSNHEGVLIDLIHEAGRRIKAGEVLGVVFNPGAYTHTSVALHDAIKGAEVPVIEVHISNVHAREAFRHHSYISPAAAGIVVGMGVQGYVLGIQGLVHKLKA.

Catalysis depends on Tyr-23, which acts as the Proton acceptor. Asn-79, His-85, and Asp-92 together coordinate substrate. His-105 serves as the catalytic Proton donor. Substrate contacts are provided by residues 106 to 107 and Arg-116; that span reads IS.

The protein belongs to the type-II 3-dehydroquinase family. In terms of assembly, homododecamer.

It carries out the reaction 3-dehydroquinate = 3-dehydroshikimate + H2O. It participates in metabolic intermediate biosynthesis; chorismate biosynthesis; chorismate from D-erythrose 4-phosphate and phosphoenolpyruvate: step 3/7. Catalyzes a trans-dehydration via an enolate intermediate. This chain is 3-dehydroquinate dehydratase, found in Marinomonas sp. (strain MWYL1).